The following is a 290-amino-acid chain: Pyridoxal kinase PdxY (290 aa).

Residues Ser12 and 47–48 (TQ) each bind substrate. Residues Asp114, Glu151, Lys184, and 211–214 (RPLL) contribute to the ATP site. A substrate-binding site is contributed by Asp225.

The protein belongs to the pyridoxine kinase family. PdxY subfamily. Homodimer. Mg(2+) is required as a cofactor.

The catalysed reaction is pyridoxal + ATP = pyridoxal 5'-phosphate + ADP + H(+). Its pathway is cofactor metabolism; pyridoxal 5'-phosphate salvage; pyridoxal 5'-phosphate from pyridoxal: step 1/1. Functionally, pyridoxal kinase involved in the salvage pathway of pyridoxal 5'-phosphate (PLP). Catalyzes the phosphorylation of pyridoxal to PLP. This Pseudomonas putida (strain W619) protein is Pyridoxal kinase PdxY.